The sequence spans 185 residues: Ribosome-recycling factor (185 aa).

It belongs to the RRF family.

The protein localises to the cytoplasm. Responsible for the release of ribosomes from messenger RNA at the termination of protein biosynthesis. May increase the efficiency of translation by recycling ribosomes from one round of translation to another. The polypeptide is Ribosome-recycling factor (Geobacter metallireducens (strain ATCC 53774 / DSM 7210 / GS-15)).